Consider the following 555-residue polypeptide: Glutamine--tRNA ligase (555 aa).

Positions Pro34–His44 match the 'HIGH' region motif. ATP-binding positions include Glu35 to Asn37 and His41 to Ser47. Positions 67 and 212 each coordinate L-glutamine. Residues Thr231, Arg261–Leu262, and Met269–Lys271 each bind ATP. A 'KMSKS' region motif is present at residues Ile268 to Arg272.

The protein belongs to the class-I aminoacyl-tRNA synthetase family. As to quaternary structure, monomer.

It is found in the cytoplasm. The catalysed reaction is tRNA(Gln) + L-glutamine + ATP = L-glutaminyl-tRNA(Gln) + AMP + diphosphate. This chain is Glutamine--tRNA ligase, found in Yersinia pseudotuberculosis serotype O:3 (strain YPIII).